The sequence spans 103 residues: uncharacterized protein (103 aa).

This is an uncharacterized protein from Caenorhabditis elegans.